Reading from the N-terminus, the 130-residue chain is Glycine cleavage system H protein (130 aa).

The 83-residue stretch at 25 to 107 folds into the Lipoyl-binding domain; it reads IATIGITEFA…YGEGWFLKVR (83 aa). Position 66 is an N6-lipoyllysine (Lys-66).

The protein belongs to the GcvH family. The glycine cleavage system is composed of four proteins: P, T, L and H. Requires (R)-lipoate as cofactor.

In terms of biological role, the glycine cleavage system catalyzes the degradation of glycine. The H protein shuttles the methylamine group of glycine from the P protein to the T protein. This chain is Glycine cleavage system H protein, found in Nostoc sp. (strain PCC 7120 / SAG 25.82 / UTEX 2576).